The sequence spans 433 residues: PBSX phage terminase large subunit (433 aa).

This sequence to B.subtilis YqaT and phage SPP1 terminase large subunit. In terms of assembly, dimer of a small and a large subunit.

Functions as a terminase. This is PBSX phage terminase large subunit (xtmB) from Bacillus subtilis (strain 168).